The primary structure comprises 601 residues: uncharacterized protein (601 aa).

Positions 24–35 (RKSNVVLKKNKG) are enriched in basic residues. Disordered regions lie at residues 24-106 (RKSN…LKLD) and 171-219 (YGND…PREE). Residues 54-81 (SQFSSRDNFRTTQTQASSSSEPSDNTNR) are compositionally biased toward polar residues. Positions 92–106 (TPKKEESNAEKLKLD) are enriched in basic and acidic residues. S236 and S238 each carry phosphoserine. Residues 260–283 (RKRKVLSSSSEDDESSSPEDLLKP) are disordered.

Its subcellular location is the nucleus. This is an uncharacterized protein from Schizosaccharomyces pombe (strain 972 / ATCC 24843) (Fission yeast).